Consider the following 478-residue polypeptide: MKLKAKYKQQSKVGKVVQVVSAVVDVSFAGKDLPHILNALECTINNEKIVLEVLQHIGDDIVRCLAMNSTDGLFRGAEVIDTGEQIKVPVGKSILGRILNVVGQPIDDLGPIKCDNFSQIHKDAPKFINQSTSRKILITGIKVIDLLTPYISGGKIGLFGGAGVGKTVLIMEIINNVAKAYKGYTVFTGVGERTREGGDLYKEMVGSNIIDLNKLENSKVTLVFGQMNEPPGARARVALTGLTIAESFRDMNEGEVLLFIDNIFRFTQAGAEISTLLGRIPSAVGYQPTLATDIGSLQERITSTKFGAITSIQAIYVPADDLTDPAPVACFAHLDATTVLSRKIAELGIYPAVDPLNSSSQILDANVIGQEHYSVATQVQEILQTYKSLQDVIAILGVDELSDDEKRIVSRARKIQRFLTQPFHVAEVFTGKQGRFVSLEDTIYGFKGLIEGKYDDLPEMAFYMVGSIDEAIEKSKTL.

Residue 160 to 167 coordinates ATP; the sequence is GGAGVGKT.

Belongs to the ATPase alpha/beta chains family. In terms of assembly, F-type ATPases have 2 components, CF(1) - the catalytic core - and CF(0) - the membrane proton channel. CF(1) has five subunits: alpha(3), beta(3), gamma(1), delta(1), epsilon(1). CF(0) has three main subunits: a(1), b(2) and c(9-12). The alpha and beta chains form an alternating ring which encloses part of the gamma chain. CF(1) is attached to CF(0) by a central stalk formed by the gamma and epsilon chains, while a peripheral stalk is formed by the delta and b chains.

It is found in the cell inner membrane. It catalyses the reaction ATP + H2O + 4 H(+)(in) = ADP + phosphate + 5 H(+)(out). Functionally, produces ATP from ADP in the presence of a proton gradient across the membrane. The catalytic sites are hosted primarily by the beta subunits. This chain is ATP synthase subunit beta, found in Orientia tsutsugamushi (strain Boryong) (Rickettsia tsutsugamushi).